Consider the following 515-residue polypeptide: 2,3-bisphosphoglycerate-independent phosphoglycerate mutase (515 aa).

Positions 14 and 64 each coordinate Mn(2+). Ser64 acts as the Phosphoserine intermediate in catalysis. Substrate is bound by residues His125, 155 to 156 (RD), Arg187, Arg193, 263 to 266 (RADR), and Lys337. Asp404, His408, Asp445, His446, and His464 together coordinate Mn(2+).

The protein belongs to the BPG-independent phosphoglycerate mutase family. As to quaternary structure, monomer. It depends on Mn(2+) as a cofactor.

It catalyses the reaction (2R)-2-phosphoglycerate = (2R)-3-phosphoglycerate. The protein operates within carbohydrate degradation; glycolysis; pyruvate from D-glyceraldehyde 3-phosphate: step 3/5. Its function is as follows. Catalyzes the interconversion of 2-phosphoglycerate and 3-phosphoglycerate. The protein is 2,3-bisphosphoglycerate-independent phosphoglycerate mutase of Yersinia pseudotuberculosis serotype I (strain IP32953).